Here is a 192-residue protein sequence, read N- to C-terminus: Dihydrofolate reductase (192 aa).

Residues Asn5–Arg191 enclose the DHFR domain. NADP(+) is bound by residues Ala11 and Gly18–Lys24. Glu32–Lys37 contributes to the substrate binding site. Residue Arg56 to Thr58 participates in NADP(+) binding. Arg72 contributes to the substrate binding site. Ser78–Ser80 serves as a coordination point for NADP(+). Substrate contacts are provided by Ile112 and Tyr118. Gly113 to Glu120 is a binding site for NADP(+).

This sequence belongs to the dihydrofolate reductase family.

It catalyses the reaction (6S)-5,6,7,8-tetrahydrofolate + NADP(+) = 7,8-dihydrofolate + NADPH + H(+). It functions in the pathway cofactor biosynthesis; tetrahydrofolate biosynthesis; 5,6,7,8-tetrahydrofolate from 7,8-dihydrofolate: step 1/1. Its function is as follows. Key enzyme in folate metabolism. Catalyzes an essential reaction for de novo glycine and purine synthesis, and for DNA precursor synthesis. The sequence is that of Dihydrofolate reductase (DFR1) from Candida albicans (Yeast).